Reading from the N-terminus, the 485-residue chain is GPI-anchored wall transfer protein 1 (485 aa).

A run of 2 helical transmembrane segments spans residues 48 to 68 (LALI…ITVY) and 73 to 93 (SYLH…NYHV). Residue Asn103 is glycosylated (N-linked (GlcNAc...) asparagine). The next 2 membrane-spanning stretches (helical) occupy residues 123 to 143 (YRSQ…FPIF) and 152 to 172 (TWGT…MGLA). An N-linked (GlcNAc...) asparagine glycan is attached at Asn180. Transmembrane regions (helical) follow at residues 200-217 (FIKS…FVSV), 229-249 (YGIH…LGIL), 259-279 (FIIG…TGLL), 300-320 (IFSF…GSFV), 359-379 (LYLA…NLSF), and 390-410 (FPYV…YDLI). A glycan (N-linked (GlcNAc...) asparagine) is linked at Asn417. Helical transmembrane passes span 431 to 451 (LFIF…INTL) and 457 to 477 (MAVI…LYLD).

The protein belongs to the PIGW family.

The protein localises to the endoplasmic reticulum membrane. It functions in the pathway glycolipid biosynthesis; glycosylphosphatidylinositol-anchor biosynthesis. Probable acetyltransferase, which acetylates the inositol ring of phosphatidylinositol during biosynthesis of GPI-anchor. This chain is GPI-anchored wall transfer protein 1 (GWT1), found in Candida albicans (strain SC5314 / ATCC MYA-2876) (Yeast).